We begin with the raw amino-acid sequence, 215 residues long: 16S rRNA (adenine(1408)-N(1))-methyltransferase (215 aa).

S-adenosyl-L-methionine is bound by residues Gly-32, Asp-55, 87 to 88 (AE), 102 to 107 (LMPWGS), and 191 to 193 (TSW).

This sequence belongs to the methyltransferase superfamily. Kanamycin-apramycin resistance family.

The enzyme catalyses adenosine(1408) in 16S rRNA + S-adenosyl-L-methionine = N(1)-methyladenosine(1408) in 16S rRNA + S-adenosyl-L-homocysteine + H(+). In terms of biological role, specifically methylates the N(1) position of adenine 1408 in 16S rRNA. Confers resistance to various aminoglycosides. The chain is 16S rRNA (adenine(1408)-N(1))-methyltransferase (kamB) from Streptoalloteichus hindustanus.